The following is a 518-amino-acid chain: Calcium-dependent protein kinase 1 (518 aa).

Positions 1-10 (MGNRTSRHHR) are enriched in basic residues. A disordered region spans residues 1 to 49 (MGNRTSRHHRAAPEQPPPQPKPKPQPQQQQQQWPRPQQPTPPPAAAPDA). Gly2 carries the N-myristoyl glycine lipid modification. The segment covering 14 to 25 (EQPPPQPKPKPQ) has biased composition (pro residues). The segment covering 26–35 (PQQQQQQWPR) has biased composition (low complexity). Pro residues predominate over residues 36–45 (PQQPTPPPAA). Positions 66 to 324 (YTFGRELGRG…SAEILNHPWI (259 aa)) constitute a Protein kinase domain. Residues 72 to 80 (LGRGQFGVT) and Lys95 contribute to the ATP site. Asp190 serves as the catalytic Proton acceptor. The tract at residues 330-360 (APDKPLDITVISRMKQFRAMNKLKKVALKVV) is autoinhibitory domain. 4 consecutive EF-hand domains span residues 367–402 (EEIT…LGTK), 403–438 (ISES…MNRL), 439–474 (EKED…YDMG), and 475–509 (DDKT…NNPE). Residues Asp380, Asp382, Ser384, Thr386, Glu391, Asp416, Asp418, Asn420, Thr422, Glu427, Asp452, Asp454, Ser456, Tyr458, Glu463, Asp487, Asp489, Asp491, Arg493, and Glu498 each contribute to the Ca(2+) site.

It belongs to the protein kinase superfamily. Ser/Thr protein kinase family. CDPK subfamily. In terms of tissue distribution, expressed in roots and leaf blades.

The protein localises to the membrane. It carries out the reaction L-seryl-[protein] + ATP = O-phospho-L-seryl-[protein] + ADP + H(+). The catalysed reaction is L-threonyl-[protein] + ATP = O-phospho-L-threonyl-[protein] + ADP + H(+). Activated by calcium. Autophosphorylation may play an important role in the regulation of the kinase activity. Its function is as follows. May play a role in signal transduction pathways that involve calcium as a second messenger. This is Calcium-dependent protein kinase 1 from Oryza sativa subsp. japonica (Rice).